The sequence spans 292 residues: 4-hydroxy-tetrahydrodipicolinate synthase (292 aa).

T45 serves as a coordination point for pyruvate. Residue Y133 is the Proton donor/acceptor of the active site. Residue K161 is the Schiff-base intermediate with substrate of the active site. I203 lines the pyruvate pocket.

It belongs to the DapA family. As to quaternary structure, homotetramer; dimer of dimers.

The protein localises to the cytoplasm. It catalyses the reaction L-aspartate 4-semialdehyde + pyruvate = (2S,4S)-4-hydroxy-2,3,4,5-tetrahydrodipicolinate + H2O + H(+). It participates in amino-acid biosynthesis; L-lysine biosynthesis via DAP pathway; (S)-tetrahydrodipicolinate from L-aspartate: step 3/4. Its function is as follows. Catalyzes the condensation of (S)-aspartate-beta-semialdehyde [(S)-ASA] and pyruvate to 4-hydroxy-tetrahydrodipicolinate (HTPA). The sequence is that of 4-hydroxy-tetrahydrodipicolinate synthase from Klebsiella pneumoniae subsp. pneumoniae (strain ATCC 700721 / MGH 78578).